Here is a 59-residue protein sequence, read N- to C-terminus: MHLAIVGALTLVLTLFVLHYTTKDDRCYILINGHSAFTNCPASPDLAKVISQLKPHNHG.

The Lumenal segment spans residues 1 to 3; the sequence is MHL. A helical membrane pass occupies residues 4-21; sequence AIVGALTLVLTLFVLHYT. Residues 22-59 are Cytoplasmic-facing; the sequence is TKDDRCYILINGHSAFTNCPASPDLAKVISQLKPHNHG.

The protein belongs to the Tymovirales TGBp3 protein family.

The protein resides in the host endoplasmic reticulum membrane. In terms of biological role, plays a role in viral cell-to-cell propagation, by facilitating genome transport to neighboring plant cells through plasmosdesmata. May induce the formation of granular vesicles derived from the Endoplasmic reticulum, which align on actin filaments. The chain is Movement protein TGBp3 from Chenopodium album (Fat hen).